Here is a 536-residue protein sequence, read N- to C-terminus: Glyco-Gag protein (536 aa).

Residues 1-54 (MSGASSGTATGARLFGISSVLGEYRVLIGDEGAGPSRSPSEVSFSVWYRSRAAR) lie on the Cytoplasmic side of the membrane. The chain crosses the membrane as a helical span at residues 55 to 75 (LVILCLVASFLVPCLTFLIAE). Residues 76–536 (TVMGQTVTTP…TQNRNKDREE (461 aa)) lie on the Extracellular side of the membrane. Asparagine 137 is a glycosylation site (N-linked (GlcNAc...) asparagine; by host). Disordered stretches follow at residues 174–284 (VRPF…NNRP) and 494–536 (ETPE…DREE). Residues 177-198 (FLPPPKPPTPLPQPLSPQPSAP) are compositionally biased toward pro residues. Residues 199–209 (PTSSLYPVLPK) show a composition bias toward low complexity. 2 stretches are compositionally biased toward pro residues: residues 210–223 (TNPP…PDPS) and 233–246 (EPPP…PPPS). The segment covering 494 to 511 (ETPEEREERLWQRQEERD) has biased composition (basic and acidic residues).

In terms of processing, glycosylated by host. Cleaved by host near the middle of the molecule, releasing the c-terminal half containing capsid and nucleoprotein domains op GAG.

The protein resides in the host cell membrane. Functionally, plays a role in viral particle release. Presumably acts by facilitating the fission of the virion bud at the cell surface. This chain is Glyco-Gag protein, found in Feline sarcoma virus (strain McDonough).